We begin with the raw amino-acid sequence, 104 residues long: ATP synthase subunit c (104 aa).

2 helical membrane passes run serine 31–glycine 51 and methionine 75–isoleucine 95.

It belongs to the ATPase C chain family. F-type ATPases have 2 components, F(1) - the catalytic core - and F(0) - the membrane proton channel. F(1) has five subunits: alpha(3), beta(3), gamma(1), delta(1), epsilon(1). F(0) has three main subunits: a(1), b(2) and c(10-14). The alpha and beta chains form an alternating ring which encloses part of the gamma chain. F(1) is attached to F(0) by a central stalk formed by the gamma and epsilon chains, while a peripheral stalk is formed by the delta and b chains.

It localises to the cell inner membrane. Its function is as follows. F(1)F(0) ATP synthase produces ATP from ADP in the presence of a proton or sodium gradient. F-type ATPases consist of two structural domains, F(1) containing the extramembraneous catalytic core and F(0) containing the membrane proton channel, linked together by a central stalk and a peripheral stalk. During catalysis, ATP synthesis in the catalytic domain of F(1) is coupled via a rotary mechanism of the central stalk subunits to proton translocation. Functionally, key component of the F(0) channel; it plays a direct role in translocation across the membrane. A homomeric c-ring of between 10-14 subunits forms the central stalk rotor element with the F(1) delta and epsilon subunits. The polypeptide is ATP synthase subunit c (Aliarcobacter butzleri (strain RM4018) (Arcobacter butzleri)).